The sequence spans 254 residues: uncharacterized protein (254 aa).

The stretch at aspartate 66 to alanine 111 forms a coiled coil.

This is an uncharacterized protein from Ostreid herpesvirus 1 (isolate France) (OsHV-1).